Consider the following 582-residue polypeptide: DNA mismatch repair protein MutL (582 aa).

It belongs to the DNA mismatch repair MutL/HexB family.

This protein is involved in the repair of mismatches in DNA. It is required for dam-dependent methyl-directed DNA mismatch repair. May act as a 'molecular matchmaker', a protein that promotes the formation of a stable complex between two or more DNA-binding proteins in an ATP-dependent manner without itself being part of a final effector complex. This chain is DNA mismatch repair protein MutL, found in Buchnera aphidicola subsp. Schizaphis graminum (strain Sg).